The chain runs to 236 residues: 7-cyano-7-deazaguanine synthase (236 aa).

ATP is bound at residue 13–23; that stretch reads FSGGQDSTVCL. Residues C200, C215, C218, and C221 each contribute to the Zn(2+) site.

This sequence belongs to the QueC family. The cofactor is Zn(2+).

It catalyses the reaction 7-carboxy-7-deazaguanine + NH4(+) + ATP = 7-cyano-7-deazaguanine + ADP + phosphate + H2O + H(+). Its pathway is purine metabolism; 7-cyano-7-deazaguanine biosynthesis. Its function is as follows. Catalyzes the ATP-dependent conversion of 7-carboxy-7-deazaguanine (CDG) to 7-cyano-7-deazaguanine (preQ(0)). This is 7-cyano-7-deazaguanine synthase from Parvibaculum lavamentivorans (strain DS-1 / DSM 13023 / NCIMB 13966).